The primary structure comprises 736 residues: Catalase-peroxidase 2 (736 aa).

The tryptophyl-tyrosyl-methioninium (Trp-Tyr) (with M-253) cross-link spans 91–227; the sequence is WHSAGTYRMG…LAAVQMGLIY (137 aa). Catalysis depends on His92, which acts as the Proton acceptor. A cross-link (tryptophyl-tyrosyl-methioninium (Tyr-Met) (with W-91)) is located at residues 227 to 253; the sequence is YVNPEGPDGNPDPVAAAYDIREVFGRM. His268 contacts heme b.

This sequence belongs to the peroxidase family. Peroxidase/catalase subfamily. Homodimer or homotetramer. Heme b is required as a cofactor. In terms of processing, formation of the three residue Trp-Tyr-Met cross-link is important for the catalase, but not the peroxidase activity of the enzyme.

It catalyses the reaction H2O2 + AH2 = A + 2 H2O. The catalysed reaction is 2 H2O2 = O2 + 2 H2O. Functionally, bifunctional enzyme with both catalase and broad-spectrum peroxidase activity. Shows peroxidase specificity towards odianisidine, ABTS and pyrogallol, but methoxyphenol and 2-chloronaphthol are not peroxidized. The protein is Catalase-peroxidase 2 of Burkholderia cenocepacia (strain ATCC BAA-245 / DSM 16553 / LMG 16656 / NCTC 13227 / J2315 / CF5610) (Burkholderia cepacia (strain J2315)).